A 214-amino-acid polypeptide reads, in one-letter code: rRNA N(6)-adenosine-methyltransferase metl-5 (214 aa).

Residues Gln25, Thr28, Gly55, Cys58, Asp78, and 106–107 (DI) each bind S-adenosyl-L-methionine.

Belongs to the methyltransferase superfamily. PrmA family. In terms of assembly, heterodimer; heterodimerizes with TRMT112/C04H5.1.

The enzyme catalyses adenosine in rRNA + S-adenosyl-L-methionine = N(6)-methyladenosine in rRNA + S-adenosyl-L-homocysteine + H(+). Functionally, catalytic subunit of a heterodimer with TRMT112/C04H5.1, which specifically methylates the 6th position of adenine in position 1717 of 18S rRNA. In Caenorhabditis elegans, this protein is rRNA N(6)-adenosine-methyltransferase metl-5.